Reading from the N-terminus, the 211-residue chain is Ubiquitin-conjugating enzyme E2 S-B (211 aa).

In terms of domain architecture, UBC core spans 11-157 (HIIRRVYKEV…ARLMTDIHAQ (147 aa)). Cysteine 95 serves as the catalytic Glycyl thioester intermediate. The disordered stretch occupies residues 158-211 (GTSLRGKDPTDPCSSASTPVVSGDGPMAKKHAGDRDKKLAAKKKTDKKRALRRL). Over residues 197–211 (AAKKKTDKKRALRRL) the composition is skewed to basic residues.

The protein belongs to the ubiquitin-conjugating enzyme family.

It catalyses the reaction S-ubiquitinyl-[E1 ubiquitin-activating enzyme]-L-cysteine + [E2 ubiquitin-conjugating enzyme]-L-cysteine = [E1 ubiquitin-activating enzyme]-L-cysteine + S-ubiquitinyl-[E2 ubiquitin-conjugating enzyme]-L-cysteine.. It functions in the pathway protein modification; protein ubiquitination. In terms of biological role, catalyzes the covalent attachment of ubiquitin to other proteins. Acts as an essential factor of the anaphase promoting complex/cyclosome (APC/C), a cell cycle-regulated ubiquitin ligase that controls progression through mitosis. Acts by specifically elongating 'Lys-11'-linked polyubiquitin chains initiated by the E2 enzyme ube2c/ubch10 on APC/C substrates, enhancing the degradation of APC/C substrates by the proteasome and promoting mitotic exit. The protein is Ubiquitin-conjugating enzyme E2 S-B (ube2s-b) of Xenopus laevis (African clawed frog).